The following is a 155-amino-acid chain: MKIQLIAVGQKMPDWVKVGFEEYQRRFPKDMPFELIEIPAGKRGKNADIKRILEQEGKAMLAAAGKGKVVTLDIPGKPWTTEQLASQLEAWKNDGRDVCLLIGGPEGLSPECKAAAEKSWSLSPLTLPHPMVRVIVAESLYRAWSLTTNHPYHRE.

S-adenosyl-L-methionine contacts are provided by residues L72, G103, and 122–127; that span reads LSPLTL.

This sequence belongs to the RNA methyltransferase RlmH family. As to quaternary structure, homodimer.

The protein resides in the cytoplasm. The enzyme catalyses pseudouridine(1915) in 23S rRNA + S-adenosyl-L-methionine = N(3)-methylpseudouridine(1915) in 23S rRNA + S-adenosyl-L-homocysteine + H(+). Its function is as follows. Specifically methylates the pseudouridine at position 1915 (m3Psi1915) in 23S rRNA. The chain is Ribosomal RNA large subunit methyltransferase H from Actinobacillus pleuropneumoniae serotype 3 (strain JL03).